The primary structure comprises 204 residues: Ancillary SecYEG translocon subunit (204 aa).

The Cytoplasmic portion of the chain corresponds to 1–23; that stretch reads MAYTIEEEQELTAIKAWWNENYK. Residues 24-44 form a helical membrane-spanning segment; the sequence is FIIVCFVIAFGGVFGWNYWQS. The Periplasmic segment spans residues 45–204; sequence HQIQKMHKAS…QLIQVRLNNL (160 aa).

Belongs to the YfgM family. In terms of assembly, interacts with the SecYEG translocon. Forms a complex with PpiD.

Its subcellular location is the cell inner membrane. Functionally, may mediate protein transfer from the SecYEG translocon to the periplasmic chaperone network via its periplasmic C-terminal region. The protein is Ancillary SecYEG translocon subunit (1057) of Aggregatibacter actinomycetemcomitans (Actinobacillus actinomycetemcomitans).